The sequence spans 407 residues: Serpin-Z2 (407 aa).

Residues 1–28 (MDSKRKNQELSTSETADPSLSKTNKKQK) are disordered. Over residues 9 to 22 (ELSTSETADPSLSK) the composition is skewed to polar residues. Residues 344 to 368 (GTEAAAATTVVVVTGSCLWEPKKKI) are RCL.

This sequence belongs to the serpin family.

Probable serine protease inhibitor. The chain is Serpin-Z2 from Arabidopsis thaliana (Mouse-ear cress).